The sequence spans 52 residues: uncharacterized protein (52 aa).

This is an uncharacterized protein from Saccharomyces cerevisiae (strain ATCC 204508 / S288c) (Baker's yeast).